Consider the following 197-residue polypeptide: Proteinase inhibitor type-2 (197 aa).

Positions 1-24 are cleaved as a signal peptide; it reads MAVHKVSFVAHLLVLGMFLLLVDA. 3 repeat units span residues 24–80, 81–140, and 141–196. 8 disulfides stabilise this stretch: C27–C115, C31–C111, C39–C121, C51–C88, C54–C72, C55–C84, C61–C97, and C114–C132.

This sequence belongs to the protease inhibitor I20 (potato type II proteinase inhibitor) family.

The sequence is that of Proteinase inhibitor type-2 from Nicotiana tabacum (Common tobacco).